Consider the following 398-residue polypeptide: DNA polymerase IV (398 aa).

Positions 5-187 (IFLVDMNAFF…LSIKSMHGVG (183 aa)) constitute a UmuC domain. Mg(2+)-binding residues include Asp9 and Asp105. Residue Glu106 is part of the active site.

The protein belongs to the DNA polymerase type-Y family. Monomer. Mg(2+) is required as a cofactor.

It localises to the cytoplasm. It carries out the reaction DNA(n) + a 2'-deoxyribonucleoside 5'-triphosphate = DNA(n+1) + diphosphate. In terms of biological role, poorly processive, error-prone DNA polymerase involved in untargeted mutagenesis. Copies undamaged DNA at stalled replication forks, which arise in vivo from mismatched or misaligned primer ends. These misaligned primers can be extended by PolIV. Exhibits no 3'-5' exonuclease (proofreading) activity. May be involved in translesional synthesis, in conjunction with the beta clamp from PolIII. The polypeptide is DNA polymerase IV (Alkaliphilus oremlandii (strain OhILAs) (Clostridium oremlandii (strain OhILAs))).